The sequence spans 152 residues: Small ribosomal subunit protein uS8m (152 aa).

Belongs to the universal ribosomal protein uS8 family. In terms of assembly, component of the mitochondrial small ribosomal subunit (mt-SSU). Mature yeast 74S mitochondrial ribosomes consist of a small (37S) and a large (54S) subunit. The 37S small subunit contains a 15S ribosomal RNA (15S mt-rRNA) and at least 32 different proteins. The 54S large subunit contains a 21S rRNA (21S mt-rRNA) and at least 45 different proteins.

The protein localises to the mitochondrion. Component of the mitochondrial ribosome (mitoribosome), a dedicated translation machinery responsible for the synthesis of mitochondrial genome-encoded proteins, including at least some of the essential transmembrane subunits of the mitochondrial respiratory chain. The mitoribosomes are attached to the mitochondrial inner membrane and translation products are cotranslationally integrated into the membrane. In Schizosaccharomyces pombe (strain 972 / ATCC 24843) (Fission yeast), this protein is Small ribosomal subunit protein uS8m (mrps8).